A 488-amino-acid chain; its full sequence is Glutamate--tRNA ligase (488 aa).

The 'HIGH' region motif lies at 16 to 26 (PSPTGEPHVGT). The short motif at 257-261 (KLSKR) is the 'KMSKS' region element. Lys260 is a binding site for ATP.

The protein belongs to the class-I aminoacyl-tRNA synthetase family. Glutamate--tRNA ligase type 1 subfamily. As to quaternary structure, monomer.

It localises to the cytoplasm. It catalyses the reaction tRNA(Glu) + L-glutamate + ATP = L-glutamyl-tRNA(Glu) + AMP + diphosphate. Catalyzes the attachment of glutamate to tRNA(Glu) in a two-step reaction: glutamate is first activated by ATP to form Glu-AMP and then transferred to the acceptor end of tRNA(Glu). The polypeptide is Glutamate--tRNA ligase (Rhizobium johnstonii (strain DSM 114642 / LMG 32736 / 3841) (Rhizobium leguminosarum bv. viciae)).